A 151-amino-acid chain; its full sequence is 3-hydroxyacyl-[acyl-carrier-protein] dehydratase FabZ (151 aa).

The active site involves H54.

The protein belongs to the thioester dehydratase family. FabZ subfamily.

It localises to the cytoplasm. The enzyme catalyses a (3R)-hydroxyacyl-[ACP] = a (2E)-enoyl-[ACP] + H2O. In terms of biological role, involved in unsaturated fatty acids biosynthesis. Catalyzes the dehydration of short chain beta-hydroxyacyl-ACPs and long chain saturated and unsaturated beta-hydroxyacyl-ACPs. This is 3-hydroxyacyl-[acyl-carrier-protein] dehydratase FabZ from Blochmanniella floridana.